The sequence spans 145 residues: Large ribosomal subunit protein uL24 (145 aa).

2 disordered regions span residues M1–A21 and K122–E145. K136 is covalently cross-linked (Glycyl lysine isopeptide (Lys-Gly) (interchain with G-Cter in SUMO2)). T139 is subject to Phosphothreonine.

It belongs to the universal ribosomal protein uL24 family. As to quaternary structure, component of the large ribosomal subunit. Interacts with DHX33. In terms of processing, ufmylated by UFL1 in response to endoplasmic reticulum stress, promoting reticulophagy of endoplasmic reticulum sheets.

Its subcellular location is the cytoplasm. Its function is as follows. Component of the large ribosomal subunit. The ribosome is a large ribonucleoprotein complex responsible for the synthesis of proteins in the cell. The protein is Large ribosomal subunit protein uL24 (RPL26) of Bos taurus (Bovine).